Consider the following 394-residue polypeptide: NAD(P)H-quinone oxidoreductase subunit H (394 aa).

This sequence belongs to the complex I 49 kDa subunit family. NDH-1 can be composed of about 15 different subunits; different subcomplexes with different compositions have been identified which probably have different functions.

The protein localises to the cellular thylakoid membrane. It carries out the reaction a plastoquinone + NADH + (n+1) H(+)(in) = a plastoquinol + NAD(+) + n H(+)(out). The enzyme catalyses a plastoquinone + NADPH + (n+1) H(+)(in) = a plastoquinol + NADP(+) + n H(+)(out). In terms of biological role, NDH-1 shuttles electrons from an unknown electron donor, via FMN and iron-sulfur (Fe-S) centers, to quinones in the respiratory and/or the photosynthetic chain. The immediate electron acceptor for the enzyme in this species is believed to be plastoquinone. Couples the redox reaction to proton translocation, and thus conserves the redox energy in a proton gradient. Cyanobacterial NDH-1 also plays a role in inorganic carbon-concentration. This is NAD(P)H-quinone oxidoreductase subunit H from Prochlorococcus marinus (strain MIT 9303).